The chain runs to 163 residues: MEMHWITLVAFIATFFNLAATSINNSSLPDVDLTNPLRFFTNIPAGLNFNEVIFLERNGFYLGGIDSPSIYHLINGTAVYFGDVRDNIMPGTVGTTRNVTDVDYGSLLTEYGYEANTDYVSRWIATHVVISPLNATEFFQTPVPVPVPVPITILHQQVNSKLH.

The helical transmembrane segment at 7-23 (TLVAFIATFFNLAATSI) threads the bilayer.

The protein resides in the membrane. This is an uncharacterized protein from Saccharomyces cerevisiae (strain ATCC 204508 / S288c) (Baker's yeast).